The chain runs to 982 residues: E3 ubiquitin-protein ligase CBL-B (982 aa).

Residues 35 to 167 (PPKQAAADRR…KAIFPNGQFQ (133 aa)) are 4H. The Cbl-PTB domain occupies 35-343 (PPKQAAADRR…GRSYNPDLTG (309 aa)). The interval 168–240 (GDNFRITKAD…FEFDIFTRLF (73 aa)) is EF-hand-like. Ca(2+)-binding residues include D221, T223, N225, Y227, and E232. The segment at 241 to 343 (QPWGSILRNW…GRSYNPDLTG (103 aa)) is SH2-like. S282 is subject to Phosphoserine; by PKC/PRKCQ. R286 contributes to the 4-O-phospho-L-tyrosine binding site. Residues 344–372 (LCEPTPHDHIKVTQEQYELYCEMGSTFQL) are linker. Residue Y363 is modified to Phosphotyrosine. An RING-type zinc finger spans residues 373–412 (CKICAENDKDVKIEPCGHLMCTSCLTAWQESDGQGCPFCR). The interval 465-588 (ASVRKCTDRQ…SVPSRDQPMP (124 aa)) is disordered. Over residues 473–486 (RQNSPVTSPGSSPL) the composition is skewed to polar residues. Residues S476, S480, S484, S521, S525, and S529 each carry the phosphoserine modification. Residues 543–567 (PLPAPPPPLRDPPPPPERPPPIPPD) are interaction with VAV1. The span at 544–566 (LPAPPPPLRDPPPPPERPPPIPP) shows a compositional bias: pro residues. S633 bears the Phosphoserine mark. A phosphotyrosine mark is found at Y664 and Y708. 2 disordered regions span residues 702–723 (EDDD…SQPS) and 745–929 (THGA…EAAL). The segment covering 714-723 (HPVSLNSQPS) has biased composition (polar residues). Pro residues predominate over residues 819–828 (PSLPPPPPPA). The segment covering 838-848 (PPGSSSRPSSG) has biased composition (low complexity). The segment covering 884 to 899 (RASQDYDQLPSSSDGS) has biased composition (polar residues). Y889 carries the phosphotyrosine modification. An interaction with SH3KBP1 region spans residues 891 to 927 (QLPSSSDGSQAPARPPKPRPRRTAPEIHHRKPHGPEA). Residues 906–922 (PKPRPRRTAPEIHHRKP) are compositionally biased toward basic residues. Positions 931–970 (NVDAKIAKLMGEGYAFEEVKRALEIAQNNVEVARSILREF) constitute a UBA domain.

In terms of assembly, interacts with SH3 domain-containing proteins LCK, CRK and SORBS1. Interacts with LCP2 and ZAP70. Interacts with CBL. Interacts with SH3 domain-containing proteins VAV1, FYN, FGR, PLCG1, GRB2, CRKL, PIK3R1 and SH3KBP1/CIN85. Identified in heterotrimeric complexes with SH3KBP1/CIN85, CD2AP and ARHGEF7, where one CBLB peptide binds two copies of the other protein. Interacts with poly-ubiquitinated proteins. Dimerization is required for the binding of poly-ubiquitin, but not for the binding of mono-ubiquitin. Interacts with EGFR (phosphorylated). Interacts with IFT20. Post-translationally, phosphorylated on tyrosine and serine residues upon TCR or BCR activation. Phosphorylated on Tyr-664 and Tyr-708 in adipocytes following insulin stimulation. Auto-ubiquitinated upon EGF-mediated cell activation or upon T-cell costimulation by CD28; which promotes proteasomal degradation.

Its subcellular location is the cytoplasm. The enzyme catalyses S-ubiquitinyl-[E2 ubiquitin-conjugating enzyme]-L-cysteine + [acceptor protein]-L-lysine = [E2 ubiquitin-conjugating enzyme]-L-cysteine + N(6)-ubiquitinyl-[acceptor protein]-L-lysine.. It functions in the pathway protein modification; protein ubiquitination. In terms of biological role, E3 ubiquitin-protein ligase which accepts ubiquitin from specific E2 ubiquitin-conjugating enzymes, and transfers it to substrates, generally promoting their degradation by the proteasome. Negatively regulates TCR (T-cell receptor), BCR (B-cell receptor) and FCER1 (high affinity immunoglobulin epsilon receptor) signal transduction pathways. In naive T-cells, inhibits VAV1 activation upon TCR engagement and imposes a requirement for CD28 costimulation for proliferation and IL-2 production. Also acts by promoting PIK3R1/p85 ubiquitination, which impairs its recruitment to the TCR and subsequent activation. In activated T-cells, inhibits PLCG1 activation and calcium mobilization upon restimulation and promotes anergy. In B-cells, acts by ubiquitinating SYK and promoting its proteasomal degradation. Slightly promotes SRC ubiquitination. May be involved in EGFR ubiquitination and internalization. May be functionally coupled with the E2 ubiquitin-protein ligase UB2D3. In association with CBL, required for proper feedback inhibition of ciliary platelet-derived growth factor receptor-alpha (PDGFRA) signaling pathway via ubiquitination and internalization of PDGFRA. The polypeptide is E3 ubiquitin-protein ligase CBL-B (Cblb) (Mus musculus (Mouse)).